Reading from the N-terminus, the 445-residue chain is FAS-associated factor 2 (445 aa).

Ala-2 is subject to N-acetylalanine. One can recognise a UBA domain in the interval 12–48 (EQTEKLLQFQDLTGIESMEQCRLALEQHNWNMEAAVQ). Lys-167 carries the N6-acetyllysine modification. A coiled-coil region spans residues 275-350 (SERLEREERN…EEKERKLECL (76 aa)). The segment at 300–361 (SLRADQEKER…PEPSPDDPES (62 aa)) is disordered. Basic and acidic residues predominate over residues 303–348 (ADQEKERKKREEKERKRRKEEEVQQQKLAEERRRQNLQEEKERKLE). The UBX domain maps to 357-439 (DDPESVKIIF…GLSHTEVLFV (83 aa)).

As to quaternary structure, identified in a complex that contains SEL1L, OS9, FAF2/UBXD8, UBE2J1/UBC6E and AUP1. Interacts with YOD1. Interacts (via N-terminus) with UBQLN2 (via C-terminus). Interacts with PNPLA2. Interacts with ZFAND2B; probably through VCP. Interacts with LMBR1L and UBAC2.

It localises to the cytoplasm. Its subcellular location is the lipid droplet. The protein resides in the endoplasmic reticulum. Functionally, plays an important role in endoplasmic reticulum-associated degradation (ERAD) that mediates ubiquitin-dependent degradation of misfolded endoplasmic reticulum proteins. By controlling the steady-state expression of the IGF1R receptor, indirectly regulates the insulin-like growth factor receptor signaling pathway. Involved in inhibition of lipid droplet degradation by binding to phospholipase PNPL2 and inhibiting its activity by promoting dissociation of PNPL2 from its endogenous activator, ABHD5 which inhibits the rate of triacylglycerol hydrolysis. Involved in stress granule disassembly: associates with ubiquitinated G3BP1 in response to heat shock, thereby promoting interaction between ubiquitinated G3BP1 and VCP, followed by G3BP1 extraction from stress granules and stress granule disassembly. This is FAS-associated factor 2 (Faf2) from Mus musculus (Mouse).